The primary structure comprises 304 residues: Putative ankyrin repeat protein R598 (304 aa).

ANK repeat units lie at residues 7-36 (NIVT…SINL), 77-107 (YIST…PVDF), 122-151 (GSNH…DVNA), 152-181 (HNYL…NVLR), 183-209 (ANGN…EIDM), 210-239 (NLSR…DINK), and 265-293 (FDFT…NVDI).

The chain is Putative ankyrin repeat protein R598 from Acanthamoeba polyphaga (Amoeba).